The primary structure comprises 473 residues: Bifunctional protein HldE (473 aa).

Residues 1–317 (MKLSMPRFDQ…RRAIQREEGS (317 aa)) form a ribokinase region. 194-197 (NLSE) contributes to the ATP binding site. Asp-263 is a catalytic residue. Positions 343–473 (FTNGCFDILH…TAIVEKIRKN (131 aa)) are cytidylyltransferase.

It in the N-terminal section; belongs to the carbohydrate kinase PfkB family. The protein in the C-terminal section; belongs to the cytidylyltransferase family. As to quaternary structure, homodimer.

The enzyme catalyses D-glycero-beta-D-manno-heptose 7-phosphate + ATP = D-glycero-beta-D-manno-heptose 1,7-bisphosphate + ADP + H(+). The catalysed reaction is D-glycero-beta-D-manno-heptose 1-phosphate + ATP + H(+) = ADP-D-glycero-beta-D-manno-heptose + diphosphate. It functions in the pathway nucleotide-sugar biosynthesis; ADP-L-glycero-beta-D-manno-heptose biosynthesis; ADP-L-glycero-beta-D-manno-heptose from D-glycero-beta-D-manno-heptose 7-phosphate: step 1/4. The protein operates within nucleotide-sugar biosynthesis; ADP-L-glycero-beta-D-manno-heptose biosynthesis; ADP-L-glycero-beta-D-manno-heptose from D-glycero-beta-D-manno-heptose 7-phosphate: step 3/4. Its function is as follows. Catalyzes the phosphorylation of D-glycero-D-manno-heptose 7-phosphate at the C-1 position to selectively form D-glycero-beta-D-manno-heptose-1,7-bisphosphate. Catalyzes the ADP transfer from ATP to D-glycero-beta-D-manno-heptose 1-phosphate, yielding ADP-D-glycero-beta-D-manno-heptose. The polypeptide is Bifunctional protein HldE (Pseudomonas putida (strain W619)).